A 425-amino-acid polypeptide reads, in one-letter code: UDP-N-acetylglucosamine 1-carboxyvinyltransferase (425 aa).

Residue 31 to 32 (KN) coordinates phosphoenolpyruvate. Arg100 serves as a coordination point for UDP-N-acetyl-alpha-D-glucosamine. Catalysis depends on Cys124, which acts as the Proton donor. Cys124 carries the post-translational modification 2-(S-cysteinyl)pyruvic acid O-phosphothioketal. UDP-N-acetyl-alpha-D-glucosamine is bound by residues 129–133 (RPIDQ), 170–172 (TVT), Asp311, and Ile333.

It belongs to the EPSP synthase family. MurA subfamily.

Its subcellular location is the cytoplasm. The enzyme catalyses phosphoenolpyruvate + UDP-N-acetyl-alpha-D-glucosamine = UDP-N-acetyl-3-O-(1-carboxyvinyl)-alpha-D-glucosamine + phosphate. Its pathway is cell wall biogenesis; peptidoglycan biosynthesis. Its function is as follows. Cell wall formation. Adds enolpyruvyl to UDP-N-acetylglucosamine. The protein is UDP-N-acetylglucosamine 1-carboxyvinyltransferase of Aquifex aeolicus (strain VF5).